The primary structure comprises 190 residues: dCTP deaminase (190 aa).

113–118 (KSTYAR) provides a ligand contact to dCTP. The active-site Proton donor/acceptor is the Glu-139. Positions 158, 172, 181, and 182 each coordinate dCTP.

The protein belongs to the dCTP deaminase family. Homotrimer.

The enzyme catalyses dCTP + H2O + H(+) = dUTP + NH4(+). It functions in the pathway pyrimidine metabolism; dUMP biosynthesis; dUMP from dCTP (dUTP route): step 1/2. Catalyzes the deamination of dCTP to dUTP. The chain is dCTP deaminase from Chlamydia abortus (strain DSM 27085 / S26/3) (Chlamydophila abortus).